A 347-amino-acid polypeptide reads, in one-letter code: Phenylalanine--tRNA ligase alpha subunit (347 aa).

E261 is a binding site for Mg(2+).

Belongs to the class-II aminoacyl-tRNA synthetase family. Phe-tRNA synthetase alpha subunit type 1 subfamily. Tetramer of two alpha and two beta subunits. It depends on Mg(2+) as a cofactor.

It localises to the cytoplasm. The catalysed reaction is tRNA(Phe) + L-phenylalanine + ATP = L-phenylalanyl-tRNA(Phe) + AMP + diphosphate + H(+). In Streptococcus thermophilus (strain ATCC BAA-491 / LMD-9), this protein is Phenylalanine--tRNA ligase alpha subunit.